The primary structure comprises 716 residues: FLYWCH-type zinc finger-containing protein 1 (716 aa).

Residues 1–35 form a disordered region; it reads MPLPEPSEQEGESVKAGQEPSPKPGTDVIPAAPRK. A Phosphoserine modification is found at Ser-21. The segment at 116–174 adopts an FLYWCH-type 1 zinc-finger fold; the sequence is FLRTPFGGRLLVLESFLYKQEKAVGDKVYWKCRQHAELGCRGRAITRGLRATVMRGHCH. Lys-134 is covalently cross-linked (Glycyl lysine isopeptide (Lys-Gly) (interchain with G-Cter in SUMO2)). Residues 191-231 are disordered; it reads PSLALPEGLGEPQGPEGPGGRVEEPLEGVGPWQCPEEPEPT. Residues 195 to 204 are compositionally biased toward low complexity; it reads LPEGLGEPQG. Ser-261 carries the phosphoserine modification. Residues 273 to 331 form an FLYWCH-type 2 zinc finger; sequence FLRTCYGGSFLVHESFLYKREKAVGDKVYWTCRDHALHGCRSRAITQGQRVTVMRGHCH. Ser-371 carries the post-translational modification Phosphoserine. Residues 377–421 form a disordered region; sequence GPGPLTLTRPRPRKRAKVEDQELPTQPEAPDEHQDMDADPGGPEF. Residue Lys-393 forms a Glycyl lysine isopeptide (Lys-Gly) (interchain with G-Cter in SUMO2) linkage. An FLYWCH-type 3 zinc finger spans residues 421–479; it reads FLKTPLGGSFLVYESFLYRREKAAGEKVYWTCRDQARMGCRSRAITQGRRVTVMRGHCH. Ser-503 carries the post-translational modification Phosphoserine. The FLYWCH-type 4 zinc-finger motif lies at 509 to 567; sequence FLKTPLGGSFLVYESFLYRREKAAGEKVYWTCRDQARMGCRSRAITQGRRVMVMRRHCH. Ser-591 carries the post-translational modification Phosphoserine. The FLYWCH-type 5 zinc-finger motif lies at 600 to 658; the sequence is FLRTSLGGRFLVHESFLYRKEKAAGEKVYWMCRDQARLGCRSRAITQGHRIMVMRSHCH. Residue Lys-685 forms a Glycyl lysine isopeptide (Lys-Gly) (interchain with G-Cter in SUMO2) linkage. Ser-696 is modified (phosphoserine).

In terms of assembly, interacts with CTNNB1 (when unphosphorylated), perhaps preventing interaction of CTNNB1 with TCF4, and thereby regulating transcription activation; phosphorylation of CTNNB1 may inhibit the interaction.

The protein resides in the nucleus. It localises to the chromosome. The protein localises to the centromere. Transcription cofactor. Negatively regulates transcription activation by catenin beta-1 CTNNB1, perhaps acting by competing with TCF4 for CTNNB1 binding. May play a role in DNA-damage response signaling. Binds specifically to DNA sequences at peri-centromeric chromatin loci. The polypeptide is FLYWCH-type zinc finger-containing protein 1 (FLYWCH1) (Homo sapiens (Human)).